A 378-amino-acid polypeptide reads, in one-letter code: C-type lectin domain family 17, member A (378 aa).

The disordered stretch occupies residues 1-119; it reads MHNLYSITGY…PPLPCKPRNM (119 aa). Topologically, residues 1–172 are cytoplasmic; the sequence is MHNLYSITGY…GCCQKRWMVY (172 aa). Acidic residues-rich tracts occupy residues 17 to 27, 43 to 53, and 69 to 79; these read MEEEEEDDDYE. Pro residues predominate over residues 86–101; that stretch reads KDLPPKPGSSAPPRPP. A helical; Signal-anchor for type II membrane protein transmembrane segment spans residues 173–193; sequence LCLLVVTSLFLGCLGLTVTLI. Residues 194–378 lie on the Extracellular side of the membrane; it reads KYQELMEELR…YWICERKCSC (185 aa). N215 and N237 each carry an N-linked (GlcNAc...) asparagine glycan. 3 cysteine pairs are disulfide-bonded: C254/C265, C282/C372, and C350/C364. The C-type lectin domain occupies 261–373; sequence FEGKCYYFSP…CYKTTYWICE (113 aa). N-linked (GlcNAc...) asparagine glycosylation is present at N285. Ca(2+) is bound by residues E341, N343, E348, N360, and D361.

Oligomer; disulfide-linked. Post-translationally, phosphorylated on tyrosine residues. Expressed on dividing B-cells of germinal centers in various tissues, including lymph nodes, tonsils, stomach, intestine, appendix and spleen.

Its subcellular location is the membrane. In terms of biological role, cell surface receptor which may be involved in carbohydrate-mediated communication between cells in the germinal center. Binds glycans with terminal alpha-linked mannose or fucose residues. The protein is C-type lectin domain family 17, member A (CLEC17A) of Homo sapiens (Human).